The following is a 329-amino-acid chain: Secretory carrier-associated membrane protein 2 (329 aa).

Positions 1-74 (MSAFDTNPFA…PSVEPAQPTP (74 aa)) are disordered. Topologically, residues 1-153 (MSAFDTNPFA…DYQRICKMLY (153 aa)) are cytoplasmic. 2 stretches are compositionally biased toward polar residues: residues 19 to 31 (QDPS…NAPQ) and 40 to 51 (FSETNAATTVPA). Residues 154–174 (YLWMLHSVTLFLNLLACLAWF) form a helical membrane-spanning segment. The Lumenal portion of the chain corresponds to 175-181 (TSDAANG). Residues 182-202 (TAFGLSILWFLIFTPCAFLCW) form a helical membrane-spanning segment. Topologically, residues 203-218 (YRPIYKAFRSDNSFSF) are cytoplasmic. The interaction with SLC9A7 stretch occupies residues 203-218 (YRPIYKAFRSDNSFSF). A helical membrane pass occupies residues 219–239 (FVFFFVFFCQIGIYFIQLIGL). Over 240–262 (PNLGTSGWLAALSTMKNGPLAVT) the chain is Lumenal. A helical transmembrane segment spans residues 263–283 (IIMMVVAGFFTLCAGLSLFLL). At 284 to 329 (QRVHAFYRRTGASFQQAQEEFSQGIFSSRTFRGAASSAARGAFQGN) the chain is on the cytoplasmic side. Phosphoserine is present on residues Ser-319 and Ser-320.

Belongs to the SCAMP family. As to quaternary structure, interacts with SLC6A4 and SLC9A7. Interacts with SLC9A5; this interaction regulates SLC9A5 cell-surface targeting and SLC9A5 activity.

It localises to the golgi apparatus. The protein localises to the trans-Golgi network membrane. The protein resides in the recycling endosome membrane. In terms of biological role, functions in post-Golgi recycling pathways. Acts as a recycling carrier to the cell surface. This chain is Secretory carrier-associated membrane protein 2 (Scamp2), found in Mus musculus (Mouse).